We begin with the raw amino-acid sequence, 306 residues long: Mating type protein SmtA-1 (306 aa).

Positions 49–104 form a DNA-binding region, alpha box; sequence APKKKVNGFMGFRSYYSPLFSQFPQKARSPFMTILWQHDPFHNEWDFMCSVYSSIR.

This sequence belongs to the MATALPHA1 family.

The protein localises to the nucleus. Functionally, mating type proteins are sequence specific DNA-binding proteins that act as master switches in fungal differentiation by controlling gene expression in a cell type-specific fashion. Transcriptional activator that induces the transcription of alpha-specific genes. The protein is Mating type protein SmtA-1 (SMTA1) of Sordaria macrospora (strain ATCC MYA-333 / DSM 997 / K(L3346) / K-hell).